Consider the following 499-residue polypeptide: CD-NTase-associated protein 4 (499 aa).

Residues 1 to 226 (MATSVLANWH…DFRFDGAARA (226 aa)) are N-terminal endonuclease domain. Active-site residues include Asp-49 and Gln-72. Asp-49 contributes to the Mg(2+) binding site. Residue Ile-73 coordinates Mg(2+). Lys-74 is an active-site residue. Residues 258 to 464 (FRNVALRSFS…HIFSAAPNAV (207 aa)) are C-terminal SAVED domain.

It belongs to the Cap4 nuclease family. A monomer in the absence of ligand, in its presence it forms oligomers. Mg(2+) serves as cofactor.

DNase activity is activated upon ligand binding (cAAG). Inhibited by EDTA. Its function is as follows. Effector DNase of a CBASS antivirus system. CBASS (cyclic oligonucleotide-based antiphage signaling system) provides immunity against bacteriophages. The CD-NTase protein (CdnD) synthesizes cyclic nucleotides in response to infection; these serve as specific second messenger signals. The signals activate a diverse range of effectors, leading to bacterial cell death and thus abortive phage infection. A type II-C(AAG) CBASS system. In terms of biological role, binds second messenger 3',3',3'-cyclic AMP-AMP-GMP (cAAG). In the presence of cAAG (synthesized by the cognate CD-NTase protein in the CBASS operon), endonucleolytically degrades dsDNA to approximately 17 bp length fragments, with a preference for 5'-C|NG sites. Only binds DNA in the presence of cAAG. Not activated by c-di-AMP, c-di-GMP, 3',3'-cyclic GMP-AMP (cGAMP) or the second messenger of A.baumanii strain ATCC 27244. Functionally, protects E.coli against phage T2 infection. When the cdnD-cap2-cap3-cap4 operon is introduced in E.coli there is a more than 10(3) decrease in the efficiency of T2 plaque formation. The operon does not protect against phage T5 and only about 10-fold against T7. Expression of cdnD-cap4 alone protects E.coli against phage T2 infection. This Enterobacter hormaechei subsp. hoffmannii (strain UCI 50) protein is CD-NTase-associated protein 4.